The chain runs to 282 residues: Transcription factor MYB20 (282 aa).

HTH myb-type domains follow at residues 9–61 (KVGL…TNYL) and 62–116 (RPDL…KKKL). 2 DNA-binding regions (H-T-H motif) span residues 37-61 (WRAV…TNYL) and 89-112 (WSKI…NTHI).

Expressed in chalaza of mature seeds, cotyledons, rosette leaves, cauline leaves, veins of stems, mature siliques, sepals and styles. Expressed at low levels in roots.

The protein localises to the nucleus. Its function is as follows. Transcription factor that acts as a positive regulator of abscisic acid (ABA) signaling in response to salt stress. Acts as a negative regulator ABI1, ABI2 and PP2CA, which are protein phosphatases 2C acting as negative regulator of ABA signaling. Binds to the DNA specific sequence and core element 5'-ACGT-3' found in the promoters of ABI1 and PP2CA to negatively regulate their expression during ABA-dependent salt stress response. The sequence is that of Transcription factor MYB20 from Arabidopsis thaliana (Mouse-ear cress).